We begin with the raw amino-acid sequence, 325 residues long: tRNA(Ile)-lysidine synthase (325 aa).

34–39 contacts ATP; sequence SGGADS.

Belongs to the tRNA(Ile)-lysidine synthase family.

The protein resides in the cytoplasm. It carries out the reaction cytidine(34) in tRNA(Ile2) + L-lysine + ATP = lysidine(34) in tRNA(Ile2) + AMP + diphosphate + H(+). Functionally, ligates lysine onto the cytidine present at position 34 of the AUA codon-specific tRNA(Ile) that contains the anticodon CAU, in an ATP-dependent manner. Cytidine is converted to lysidine, thus changing the amino acid specificity of the tRNA from methionine to isoleucine. In Rhodococcus opacus (strain B4), this protein is tRNA(Ile)-lysidine synthase.